Here is a 504-residue protein sequence, read N- to C-terminus: Aspartyl/glutamyl-tRNA(Asn/Gln) amidotransferase subunit B (504 aa).

Belongs to the GatB/GatE family. GatB subfamily. As to quaternary structure, heterotrimer of A, B and C subunits.

The catalysed reaction is L-glutamyl-tRNA(Gln) + L-glutamine + ATP + H2O = L-glutaminyl-tRNA(Gln) + L-glutamate + ADP + phosphate + H(+). It carries out the reaction L-aspartyl-tRNA(Asn) + L-glutamine + ATP + H2O = L-asparaginyl-tRNA(Asn) + L-glutamate + ADP + phosphate + 2 H(+). Its function is as follows. Allows the formation of correctly charged Asn-tRNA(Asn) or Gln-tRNA(Gln) through the transamidation of misacylated Asp-tRNA(Asn) or Glu-tRNA(Gln) in organisms which lack either or both of asparaginyl-tRNA or glutaminyl-tRNA synthetases. The reaction takes place in the presence of glutamine and ATP through an activated phospho-Asp-tRNA(Asn) or phospho-Glu-tRNA(Gln). The chain is Aspartyl/glutamyl-tRNA(Asn/Gln) amidotransferase subunit B from Tropheryma whipplei (strain TW08/27) (Whipple's bacillus).